The primary structure comprises 104 residues: MQRLCAYVLIHVLALAACSEASWKPGFQLQDASSGPGANRGKEPHELDRLGPASHHRRQLGLQGPPHLVADLAKKQGPWMEEEEEAYGWMDFGRRSAEEGDQRP.

Positions 1–21 (MQRLCAYVLIHVLALAACSEA) are cleaved as a signal peptide. A propeptide spanning residues 22–58 (SWKPGFQLQDASSGPGANRGKEPHELDRLGPASHHRR) is cleaved from the precursor. The tract at residues 27 to 67 (FQLQDASSGPGANRGKEPHELDRLGPASHHRRQLGLQGPPH) is disordered. Residues 40–49 (RGKEPHELDR) show a composition bias toward basic and acidic residues. The residue at position 59 (glutamine 59) is a Pyrrolidone carboxylic acid; in form big gastrin. Pyrrolidone carboxylic acid; in form gastrin is present on glutamine 76. Position 87 is a sulfotyrosine; partial (tyrosine 87). At phenylalanine 92 the chain carries Phenylalanine amide. A Phosphoserine modification is found at serine 96. A propeptide spanning residues 96–104 (SAEEGDQRP) is cleaved from the precursor.

This sequence belongs to the gastrin/cholecystokinin family. In terms of processing, sulfation enhances proteolytic processing, and blocks peptide degradation. Levels of sulfation differ between proteolytically-cleaved gastrins. Thus, gastrin-6 is almost 73% sulfated, whereas the larger gastrins are less than 50% sulfated. Sulfation levels are also tissue-specific.

The protein localises to the secreted. Functionally, gastrin stimulates the stomach mucosa to produce and secrete hydrochloric acid and the pancreas to secrete its digestive enzymes. It also stimulates smooth muscle contraction and increases blood circulation and water secretion in the stomach and intestine. This Sus scrofa (Pig) protein is Gastrin (GAST).